The chain runs to 581 residues: A-type ATP synthase subunit A (581 aa).

ATP is bound at residue 232 to 239; it reads GPFGSGKT.

Belongs to the ATPase alpha/beta chains family. Has multiple subunits with at least A(3), B(3), C, D, E, F, H, I and proteolipid K(x).

The protein localises to the cell membrane. The catalysed reaction is ATP + H2O + 4 H(+)(in) = ADP + phosphate + 5 H(+)(out). In terms of biological role, component of the A-type ATP synthase that produces ATP from ADP in the presence of a proton gradient across the membrane. The A chain is the catalytic subunit. The chain is A-type ATP synthase subunit A from Methanocorpusculum labreanum (strain ATCC 43576 / DSM 4855 / Z).